Reading from the N-terminus, the 217-residue chain is Pyridoxine/pyridoxamine 5'-phosphate oxidase (217 aa).

Substrate contacts are provided by residues 13–16 (RREY) and K71. Residues 66-71 (RIVLLK), 81-82 (YT), R87, K88, and Q110 each bind FMN. Residues Y128, R132, and S136 each contribute to the substrate site. FMN-binding positions include 145-146 (QS) and W190. Residue 196–198 (RLH) participates in substrate binding. Residue R200 participates in FMN binding.

The protein belongs to the pyridoxamine 5'-phosphate oxidase family. In terms of assembly, homodimer. Requires FMN as cofactor.

The enzyme catalyses pyridoxamine 5'-phosphate + O2 + H2O = pyridoxal 5'-phosphate + H2O2 + NH4(+). It carries out the reaction pyridoxine 5'-phosphate + O2 = pyridoxal 5'-phosphate + H2O2. It participates in cofactor metabolism; pyridoxal 5'-phosphate salvage; pyridoxal 5'-phosphate from pyridoxamine 5'-phosphate: step 1/1. Its pathway is cofactor metabolism; pyridoxal 5'-phosphate salvage; pyridoxal 5'-phosphate from pyridoxine 5'-phosphate: step 1/1. Its function is as follows. Catalyzes the oxidation of either pyridoxine 5'-phosphate (PNP) or pyridoxamine 5'-phosphate (PMP) into pyridoxal 5'-phosphate (PLP). This chain is Pyridoxine/pyridoxamine 5'-phosphate oxidase, found in Photorhabdus laumondii subsp. laumondii (strain DSM 15139 / CIP 105565 / TT01) (Photorhabdus luminescens subsp. laumondii).